The chain runs to 457 residues: Exodeoxyribonuclease 7 large subunit (457 aa).

Belongs to the XseA family. As to quaternary structure, heterooligomer composed of large and small subunits.

It localises to the cytoplasm. The catalysed reaction is Exonucleolytic cleavage in either 5'- to 3'- or 3'- to 5'-direction to yield nucleoside 5'-phosphates.. In terms of biological role, bidirectionally degrades single-stranded DNA into large acid-insoluble oligonucleotides, which are then degraded further into small acid-soluble oligonucleotides. The chain is Exodeoxyribonuclease 7 large subunit from Citrobacter koseri (strain ATCC BAA-895 / CDC 4225-83 / SGSC4696).